Consider the following 74-residue polypeptide: Large ribosomal subunit protein bL31 (74 aa).

Zn(2+)-binding residues include Cys16, Cys18, Cys37, and Cys40.

Belongs to the bacterial ribosomal protein bL31 family. Type A subfamily. As to quaternary structure, part of the 50S ribosomal subunit. Requires Zn(2+) as cofactor.

Its function is as follows. Binds the 23S rRNA. This Nitrosomonas europaea (strain ATCC 19718 / CIP 103999 / KCTC 2705 / NBRC 14298) protein is Large ribosomal subunit protein bL31.